The chain runs to 191 residues: Molybdenum cofactor guanylyltransferase (191 aa).

Residues 11–13 (LCG), lysine 23, aspartate 66, and aspartate 97 each bind GTP. Mg(2+) is bound at residue aspartate 97.

It belongs to the MobA family. As to quaternary structure, monomer. Mg(2+) serves as cofactor.

The protein localises to the cytoplasm. The enzyme catalyses Mo-molybdopterin + GTP + H(+) = Mo-molybdopterin guanine dinucleotide + diphosphate. Transfers a GMP moiety from GTP to Mo-molybdopterin (Mo-MPT) cofactor (Moco or molybdenum cofactor) to form Mo-molybdopterin guanine dinucleotide (Mo-MGD) cofactor. The protein is Molybdenum cofactor guanylyltransferase of Campylobacter jejuni subsp. jejuni serotype O:6 (strain 81116 / NCTC 11828).